The sequence spans 208 residues: Small ribosomal subunit protein uS4 (208 aa).

Residues 28-48 (YMERRPYGPGEHGRARKKQDS) form a disordered region. The S4 RNA-binding domain maps to 95–160 (MRLDALVLRA…MPPFQVAAAG (66 aa)).

This sequence belongs to the universal ribosomal protein uS4 family. In terms of assembly, part of the 30S ribosomal subunit. Contacts protein S5. The interaction surface between S4 and S5 is involved in control of translational fidelity.

Functionally, one of the primary rRNA binding proteins, it binds directly to 16S rRNA where it nucleates assembly of the body of the 30S subunit. Its function is as follows. With S5 and S12 plays an important role in translational accuracy. The sequence is that of Small ribosomal subunit protein uS4 from Arthrobacter sp. (strain FB24).